A 188-amino-acid polypeptide reads, in one-letter code: dCTP deaminase (188 aa).

Residues 111–116, 135–137, glutamine 156, tyrosine 170, and glutamine 180 each bind dCTP; these read KSTYAR and TLE. Glutamate 137 functions as the Proton donor/acceptor in the catalytic mechanism.

It belongs to the dCTP deaminase family. Homotrimer.

It carries out the reaction dCTP + H2O + H(+) = dUTP + NH4(+). Its pathway is pyrimidine metabolism; dUMP biosynthesis; dUMP from dCTP (dUTP route): step 1/2. Catalyzes the deamination of dCTP to dUTP. The polypeptide is dCTP deaminase (Chromohalobacter salexigens (strain ATCC BAA-138 / DSM 3043 / CIP 106854 / NCIMB 13768 / 1H11)).